Here is a 213-residue protein sequence, read N- to C-terminus: Proteasome subunit beta (213 aa).

Residues 1 to 11 (MSMIEEKIYKG) constitute a propeptide, removed in mature form; by autocatalysis. The Nucleophile role is filled by Thr12.

This sequence belongs to the peptidase T1B family. The 20S proteasome core is composed of 14 alpha and 14 beta subunits that assemble into four stacked heptameric rings, resulting in a barrel-shaped structure. The two inner rings, each composed of seven catalytic beta subunits, are sandwiched by two outer rings, each composed of seven alpha subunits. The catalytic chamber with the active sites is on the inside of the barrel. Has probably a gated structure, the ends of the cylinder being occluded by the N-termini of the alpha-subunits. Is likely capped at one or both ends by the proteasome regulatory ATPase, PAN.

It is found in the cytoplasm. It carries out the reaction Cleavage of peptide bonds with very broad specificity.. The formation of the proteasomal ATPase PAN-20S proteasome complex, via the docking of the C-termini of PAN into the intersubunit pockets in the alpha-rings, triggers opening of the gate for substrate entry. Interconversion between the open-gate and close-gate conformations leads to a dynamic regulation of the 20S proteasome proteolysis activity. Component of the proteasome core, a large protease complex with broad specificity involved in protein degradation. The polypeptide is Proteasome subunit beta (Archaeoglobus fulgidus (strain ATCC 49558 / DSM 4304 / JCM 9628 / NBRC 100126 / VC-16)).